Here is a 264-residue protein sequence, read N- to C-terminus: Phosphonates import ATP-binding protein PhnC (264 aa).

Residues 7–254 (LSIRAASKTF…KLIDIYGPEF (248 aa)) form the ABC transporter domain. 39-46 (GPSGSGKS) lines the ATP pocket.

Belongs to the ABC transporter superfamily. Phosphonates importer (TC 3.A.1.9.1) family. In terms of assembly, the complex is composed of two ATP-binding proteins (PhnC), two transmembrane proteins (PhnE) and a solute-binding protein (PhnD).

The protein localises to the cell inner membrane. It catalyses the reaction phosphonate(out) + ATP + H2O = phosphonate(in) + ADP + phosphate + H(+). Functionally, part of the ABC transporter complex PhnCDE involved in phosphonates import. Responsible for energy coupling to the transport system. The sequence is that of Phosphonates import ATP-binding protein PhnC from Caulobacter vibrioides (strain ATCC 19089 / CIP 103742 / CB 15) (Caulobacter crescentus).